Consider the following 181-residue polypeptide: MTQVTPAIIKNSITTIADYPKAGIMFRDVTTLMANPDAFKATIDAFIAAYKDQGFTKIIGTESRGFIFGAPLSYALGIPFIPVRKPGKLPREVVRQDYLLEYGEDTLELHVDAIVPGDKVLLVDDLLATGGTIEATIKLVQKLGGEATDAAFVVSLPELGGEKRIAKMGIKILKLVEFEGE.

This sequence belongs to the purine/pyrimidine phosphoribosyltransferase family. Homodimer.

The protein localises to the cytoplasm. The catalysed reaction is AMP + diphosphate = 5-phospho-alpha-D-ribose 1-diphosphate + adenine. Its pathway is purine metabolism; AMP biosynthesis via salvage pathway; AMP from adenine: step 1/1. Functionally, catalyzes a salvage reaction resulting in the formation of AMP, that is energically less costly than de novo synthesis. This chain is Adenine phosphoribosyltransferase, found in Pseudoalteromonas translucida (strain TAC 125).